We begin with the raw amino-acid sequence, 195 residues long: ATP-dependent Clp protease proteolytic subunit (195 aa).

Catalysis depends on S98, which acts as the Nucleophile. The active site involves H123.

The protein belongs to the peptidase S14 family. Fourteen ClpP subunits assemble into 2 heptameric rings which stack back to back to give a disk-like structure with a central cavity, resembling the structure of eukaryotic proteasomes.

The protein localises to the cytoplasm. It catalyses the reaction Hydrolysis of proteins to small peptides in the presence of ATP and magnesium. alpha-casein is the usual test substrate. In the absence of ATP, only oligopeptides shorter than five residues are hydrolyzed (such as succinyl-Leu-Tyr-|-NHMec, and Leu-Tyr-Leu-|-Tyr-Trp, in which cleavage of the -Tyr-|-Leu- and -Tyr-|-Trp bonds also occurs).. Its function is as follows. Cleaves peptides in various proteins in a process that requires ATP hydrolysis. Has a chymotrypsin-like activity. Plays a major role in the degradation of misfolded proteins. The chain is ATP-dependent Clp protease proteolytic subunit from Helicobacter pylori (strain J99 / ATCC 700824) (Campylobacter pylori J99).